The primary structure comprises 95 residues: Histone-like DNA-binding protein (95 aa).

This sequence belongs to the bacterial histone-like protein family.

In Rickettsia rickettsii, this protein is Histone-like DNA-binding protein.